The chain runs to 582 residues: Semenogelin-2 (582 aa).

The first 23 residues, methionine 1–glycine 23, serve as a signal peptide directing secretion. 5 disordered regions span residues lysine 25–serine 62, lysine 131–phenylalanine 156, lysine 173–serine 192, asparagine 272–glutamine 477, and valine 502–histidine 554. Residues glycine 50–serine 59 show a composition bias toward basic and acidic residues. Polar residues-rich tracts occupy residues histidine 137–serine 151 and glutamate 174–serine 192. The segment covering arginine 292–serine 310 has biased composition (basic and acidic residues). The segment covering lysine 325–glutamine 335 has biased composition (polar residues). Positions aspartate 336–lysine 345 are enriched in basic and acidic residues. The span at lysine 385–glutamine 395 shows a compositional bias: polar residues. Positions aspartate 396 to lysine 405 are enriched in basic and acidic residues. The span at lysine 445–glutamine 455 shows a compositional bias: polar residues. Residues aspartate 456–lysine 465 are compositionally biased toward basic and acidic residues. Composition is skewed to polar residues over residues isoleucine 466 to glutamine 477 and serine 506 to lysine 529. The segment covering leucine 537–tyrosine 546 has biased composition (basic and acidic residues).

The protein belongs to the semenogelin family. Interacts with SERPINA5.

It is found in the secreted. Its function is as follows. Participates in the formation of a gel matrix (sperm coagulum) entrapping the accessory gland secretions and ejaculated spermatozoa. This chain is Semenogelin-2 (SEMG2), found in Macaca nemestrina (Pig-tailed macaque).